Here is a 940-residue protein sequence, read N- to C-terminus: MYTNLPKACLTGIVLTISTHSGPQVVYHYPPVKQPVEARRGRKVDSRNERVRSWQAGRMPSAASGAVDAVGEGVDGLEEESSESELDRSSGLSESEVSTDWADYSMSSSDSESEMREDGGGESSAVGGSSAAEGGEESLAEGADSSIAWPGPSESYNQLLESQSMVGSSANVAAASTKPKSIKSRHSQISANKLFQYLTNTSDADSRRQSVFSKLTGNEDSETIRLTDSVNLLDLESLLEDLEPGLADVDISELLDVEVFQPGRFQDVSKIFNFDAEFVAELCSPPKEMCNTRFELTVDDLCFLGLPIHVDESGRWRKQKVKRQQTNTRSKRSSSGGKPDAGSRTSVGLPHGTQERQPSTDQSGSGAPYLAQSSSESGQLRDPEQSDDVEDLQKAVHMFHVCFIMNPQLVEYNERIDDMYHYIVTRLSLILRYIQDKKGYVVRECAKILKTRDRILKKSLKLKKSHGQALQGRYLYECILKSSSLARALTKCFNSIINNEIVTLDIDNHKVISLQIPIKNEFSSLPDLKINPVLRGSYLTSLLNDSFLKQPVDFAAGSMMPGGDVMHDDNDVLDYALLLLDDTPKIIKDLEFSSFGSDLANVIMINLVKNLKPTVSLRSYLPLVSNLLEANLSLSARAAGSRHAASNAADSHSTPLQHSMIRSIVLHLVYWRYARIILPLSSKNTYIVSPLAPIRGTAADDFENTDMVKQGCKALIYQHQDLFHEKFPTLPTLPSFLSSISTCKPRSFGHLIPSKDHNLLYLSVLAWLIRYGYLTQLLTFVWLRVDRRIKIAVDEDLEREGVRTWNSIVKKEHRQNPHDNVAAPTREPASSAIDETASSSEHGDANISDGQESLDDYLFKESDYTIILEPKTATALEKRWLFKCIENQPTEMQLLFRKVIKYFNGKTPLELVEIKENIPKQELKKLIACLDKYVVELKHW.

The signal sequence occupies residues 1–21; that stretch reads MYTNLPKACLTGIVLTISTHS. The segment covering 37–52 has biased composition (basic and acidic residues); the sequence is EARRGRKVDSRNERVR. Disordered regions lie at residues 37-155, 317-387, and 812-848; these read EARR…PSES, RKQK…EQSD, and EHRQNPHDNVAAPTREPASSAIDETASSSEHGDANIS. Low complexity predominate over residues 61–72; the sequence is SAASGAVDAVGE. Acidic residues predominate over residues 75-84; it reads DGLEEESSES. Residues 123–133 show a composition bias toward low complexity; the sequence is SSAVGGSSAAE. Composition is skewed to polar residues over residues 324 to 336 and 355 to 378; these read QQTNTRSKRSSSG and ERQPSTDQSGSGAPYLAQSSSESG.

The protein belongs to the NPR3 family.

Functionally, mediates inactivation of the TORC1 complex in response to amino acid starvation. Required for meiotic nuclear division. This is Nitrogen permease regulator 3 (NPR3) from Eremothecium gossypii (strain ATCC 10895 / CBS 109.51 / FGSC 9923 / NRRL Y-1056) (Yeast).